The sequence spans 1005 residues: MTNSISGYQPTVTTSTSSTTSASGASGSLGASSVSTTANATVTQTANATNSAATSSIQTTGETVVNYTNSASAPNVTVSTSSSSTQATATSNKTSQAVAGKITSPDTSESSETSSTSSSDHIPSDYDDVGSNSGDISNNYDDVGSNNGDISSNYDDAAADYEPIRTTENIYESIGGSRTSGPENTSGGAAAALNSLRGSSYSNYDDAAADYEPIRTTENIYESIGGSRTSGPENTSGGAAAALNSLRGSSYSNYDDAAADYEPIRTTENIYESIGGSRTSGPENTSDGAAAAALNSLRGSSYTTGPRNEGVFGPGPEGLPDMSLPSYDPTNKTSLLTFLSNPHVKSKMLENSGHFVFIDTDRSSFILVPNGNWDQVCSIKVQNGKTKEDLDIKDLENMCAKFCTGFSKFSGDWDSLVEPMVSAKAGVASGGNLPNTVIINNKFKTCVAYGPWNSQEASSGYTPSAWRRGHRVDFGGIFEKANDFNKINWGTQAGPSSEDDGISFSNETPGAGPAAAPSPTPSSIPIINVNVNVGGTNVNIGDTNVNTTNTTPTTQSTDASTDTSDIDDINTNNQTDDINTTDKDSDGAGGVNGDISETESSSGDDSGSVSSSESDKNASVGNDGPAMKDILSAVRKHLDVVYPGENGGSTEGPLPANQTLGDVISDVENKGSAQDTKLSGNTGAGDDDPTTTAAVGNGAEEITLSDTDSGIGDDVSDTASSSGDESGGVSSPSSESNKNTAVGNDGPSGLDILAAVRKHLDKVYPGDNGGSTEGPLQANQTLGDIVQDMETTGTSQETVVSPWKGSTSSTESAGGSGSVQTLLPSPPPTPSTTTLRTGTGATTTSLMMGGPIKADIITTGGGGRIPGGGTLEKLLPRIRAHLDISFDAQGDLVSTEEPQLGSIVNKFRQETGSRGILAFVESAPGKPGSAQVLTGTGGDKGNLFQAAAAVTQALGNVAGKVNLAIQGQKLSSLVNDDGKGSVGRDLFQAAAQTTQVLSALIDTVG.

Polar residues predominate over residues 1–10 (MTNSISGYQP). 6 disordered regions span residues 1-36 (MTNSISGYQPTVTTSTSSTTSASGASGSLGASSVST), 73-155 (APNV…SNYD), 487-521 (INWGTQAGPSSEDDGISFSNETPGAGPAAAPSPTP), 542-626 (DTNV…DGPA), 671-749 (GSAQ…GPSG), and 792-847 (TGTS…TSLM). Composition is skewed to low complexity over residues 11–36 (TVTTSTSSTTSASGASGSLGASSVST) and 73–121 (APNV…SSDH). Residues 130–154 (GSNSGDISNNYDDVGSNNGDISSNY) are compositionally biased toward polar residues. Low complexity-rich tracts occupy residues 542–578 (DTNVNTTNTTPTTQSTDASTDTSDIDDINTNNQTDDI), 593–612 (GDISETESSSGDDSGSVSSS), 720–736 (SSSGDESGGVSSPSSES), and 831–846 (STTTLRTGTGATTTSL).

This sequence belongs to the chlamydial CPn_0572/CT_456/TC_0741 family. Post-translationally, phosphorylated on a tyrosine on attachment to the host cell. Tyrosine phosphorylation is temporally and spatially associated with recruitment of actin to the site of chlamydial entry. Phosphorylated Tarp seems to remain cytoplasmically exposed on the inclusion membrane at one side of internalized elementary bodies for several hours after entry.

It is found in the secreted. Appears to initiate or participate in signaling events that regulate the actin recruitment, which ultimately leads to internalization. This Chlamydia trachomatis serovar D (strain ATCC VR-885 / DSM 19411 / UW-3/Cx) protein is Translocated actin-recruiting phosphoprotein (tarP).